Here is a 227-residue protein sequence, read N- to C-terminus: Lipoprotein-releasing system ATP-binding protein LolD (227 aa).

The region spanning Ile8–Thr226 is the ABC transporter domain. Gly44–Thr51 is a binding site for ATP.

The protein belongs to the ABC transporter superfamily. Lipoprotein translocase (TC 3.A.1.125) family. The complex is composed of two ATP-binding proteins (LolD) and two transmembrane proteins (LolC and LolE).

The protein resides in the cell inner membrane. Part of the ABC transporter complex LolCDE involved in the translocation of mature outer membrane-directed lipoproteins, from the inner membrane to the periplasmic chaperone, LolA. Responsible for the formation of the LolA-lipoprotein complex in an ATP-dependent manner. This is Lipoprotein-releasing system ATP-binding protein LolD from Syntrophotalea carbinolica (strain DSM 2380 / NBRC 103641 / GraBd1) (Pelobacter carbinolicus).